The following is a 668-amino-acid chain: Major S-layer protein (668 aa).

A signal peptide spans 1–24 (MKRFAAVTLAALMLLTVFASAASA). N-linked (GlcNAc...) asparagine glycans are attached at residues Asn-36, Asn-65, Asn-111, Asn-265, Asn-583, Asn-596, Asn-602, Asn-608, Asn-617, and Asn-635. Residues 584-650 (ETTSITKPDE…ESNGSPGFGV (67 aa)) are disordered. Positions 596–611 (NETVSDNETMPDNTSS) are enriched in polar residues. Residues 631–641 (EPTDNETEPDE) show a composition bias toward acidic residues. The chain crosses the membrane as a helical span at residues 644–664 (GSPGFGVVLGLAGLLGVVYLV).

This sequence belongs to the Methanosarcinales S-layer protein family. In terms of processing, glycosylated.

It localises to the secreted. Its subcellular location is the cell wall. The protein localises to the S-layer. The protein resides in the cell membrane. In terms of biological role, S-layer protein. The S-layer is a paracrystalline mono-layered assembly of proteins which coat the surface of the cell. The protein is Major S-layer protein of Methanosarcina barkeri (strain Fusaro / DSM 804).